The following is a 144-amino-acid chain: D-aminoacyl-tRNA deacylase (144 aa).

Positions 136 to 137 (GP) match the Gly-cisPro motif, important for rejection of L-amino acids motif.

It belongs to the DTD family. Homodimer.

Its subcellular location is the cytoplasm. It catalyses the reaction glycyl-tRNA(Ala) + H2O = tRNA(Ala) + glycine + H(+). The enzyme catalyses a D-aminoacyl-tRNA + H2O = a tRNA + a D-alpha-amino acid + H(+). An aminoacyl-tRNA editing enzyme that deacylates mischarged D-aminoacyl-tRNAs. Also deacylates mischarged glycyl-tRNA(Ala), protecting cells against glycine mischarging by AlaRS. Acts via tRNA-based rather than protein-based catalysis; rejects L-amino acids rather than detecting D-amino acids in the active site. By recycling D-aminoacyl-tRNA to D-amino acids and free tRNA molecules, this enzyme counteracts the toxicity associated with the formation of D-aminoacyl-tRNA entities in vivo and helps enforce protein L-homochirality. This Haemophilus influenzae (strain PittGG) protein is D-aminoacyl-tRNA deacylase.